We begin with the raw amino-acid sequence, 517 residues long: Putative thymidine phosphorylase (517 aa).

Belongs to the thymidine/pyrimidine-nucleoside phosphorylase family. Type 2 subfamily.

The catalysed reaction is thymidine + phosphate = 2-deoxy-alpha-D-ribose 1-phosphate + thymine. The polypeptide is Putative thymidine phosphorylase (Legionella pneumophila subsp. pneumophila (strain Philadelphia 1 / ATCC 33152 / DSM 7513)).